Here is a 355-residue protein sequence, read N- to C-terminus: Fructose-1,6-bisphosphatase class 1 (355 aa).

4 residues coordinate Mg(2+): glutamate 94, aspartate 116, leucine 118, and aspartate 119. Residues 119–122 (DGSS), asparagine 211, and 263–265 (YLY) each bind substrate. A Mg(2+)-binding site is contributed by glutamate 283.

The protein belongs to the FBPase class 1 family. Homotetramer. Requires Mg(2+) as cofactor.

It localises to the cytoplasm. It carries out the reaction beta-D-fructose 1,6-bisphosphate + H2O = beta-D-fructose 6-phosphate + phosphate. The protein operates within carbohydrate biosynthesis; Calvin cycle. The chain is Fructose-1,6-bisphosphatase class 1 from Rhodospirillum rubrum (strain ATCC 11170 / ATH 1.1.1 / DSM 467 / LMG 4362 / NCIMB 8255 / S1).